The following is a 208-amino-acid chain: Large ribosomal subunit protein bL25 (208 aa).

It belongs to the bacterial ribosomal protein bL25 family. CTC subfamily. Part of the 50S ribosomal subunit; part of the 5S rRNA/L5/L18/L25 subcomplex. Contacts the 5S rRNA. Binds to the 5S rRNA independently of L5 and L18.

In terms of biological role, this is one of the proteins that binds to the 5S RNA in the ribosome where it forms part of the central protuberance. This chain is Large ribosomal subunit protein bL25, found in Phenylobacterium zucineum (strain HLK1).